The chain runs to 268 residues: GTP cyclohydrolase FolE2 (268 aa).

It belongs to the GTP cyclohydrolase IV family.

The enzyme catalyses GTP + H2O = 7,8-dihydroneopterin 3'-triphosphate + formate + H(+). It functions in the pathway cofactor biosynthesis; 7,8-dihydroneopterin triphosphate biosynthesis; 7,8-dihydroneopterin triphosphate from GTP: step 1/1. Functionally, converts GTP to 7,8-dihydroneopterin triphosphate. This is GTP cyclohydrolase FolE2 from Methylococcus capsulatus (strain ATCC 33009 / NCIMB 11132 / Bath).